We begin with the raw amino-acid sequence, 640 residues long: Threonine--tRNA ligase (640 aa).

Residues 1–60 (MKITFPDGAVKEFEPGVSTADIAASISPGLKKKALAGKLNGELLDLVTPIHEDGAIEIVT) form the TGS domain. Positions 241 to 538 (DHRKLGKELE…LIEEYKGAFP (298 aa)) are catalytic. 3 residues coordinate Zn(2+): C334, H385, and H515.

The protein belongs to the class-II aminoacyl-tRNA synthetase family. In terms of assembly, homodimer. Zn(2+) is required as a cofactor.

The protein resides in the cytoplasm. The enzyme catalyses tRNA(Thr) + L-threonine + ATP = L-threonyl-tRNA(Thr) + AMP + diphosphate + H(+). Its function is as follows. Catalyzes the attachment of threonine to tRNA(Thr) in a two-step reaction: L-threonine is first activated by ATP to form Thr-AMP and then transferred to the acceptor end of tRNA(Thr). Also edits incorrectly charged L-seryl-tRNA(Thr). This chain is Threonine--tRNA ligase, found in Listeria monocytogenes serovar 1/2a (strain ATCC BAA-679 / EGD-e).